The chain runs to 510 residues: D-alanine--D-alanyl carrier protein ligase (510 aa).

157–158 (TS) contributes to the ATP binding site. Position 202 (aspartate 202) interacts with D-alanine. 297 to 302 (NTYGPT) contacts ATP. Residue valine 306 coordinates D-alanine. The ATP site is built by aspartate 389 and lysine 498. Lysine 498 is a D-alanine binding site.

This sequence belongs to the ATP-dependent AMP-binding enzyme family. DltA subfamily.

The protein resides in the cytoplasm. The enzyme catalyses holo-[D-alanyl-carrier protein] + D-alanine + ATP = D-alanyl-[D-alanyl-carrier protein] + AMP + diphosphate. It functions in the pathway cell wall biogenesis; lipoteichoic acid biosynthesis. In terms of biological role, catalyzes the first step in the D-alanylation of lipoteichoic acid (LTA), the activation of D-alanine and its transfer onto the D-alanyl carrier protein (Dcp) DltC. In an ATP-dependent two-step reaction, forms a high energy D-alanyl-AMP intermediate, followed by transfer of the D-alanyl residue as a thiol ester to the phosphopantheinyl prosthetic group of the Dcp. D-alanylation of LTA plays an important role in modulating the properties of the cell wall in Gram-positive bacteria, influencing the net charge of the cell wall. This is D-alanine--D-alanyl carrier protein ligase from Listeria monocytogenes serovar 1/2a (strain ATCC BAA-679 / EGD-e).